A 1470-amino-acid chain; its full sequence is Guanine nucleotide exchange factor subunit R06F6.8 (1470 aa).

WD repeat units follow at residues 20–58 (STAA…LLCS), 68–107 (ETRG…DEQC), and 472–512 (AYCS…VVGV). Disordered regions lie at residues 673–710 (QSQN…PMNQ), 975–1001 (FFRT…ADSS), 1017–1045 (RLNK…SKDK), and 1238–1259 (RSPS…SPSS). The span at 689 to 707 (SNVSIQSVSTSTTSEPSSP) shows a compositional bias: low complexity. The segment covering 983–1001 (AKTSLSRRPTVSSPSADSS) has biased composition (polar residues). A compositionally biased stretch (basic and acidic residues) spans 1028-1045 (EQKDAPRKDSIGGSSKDK). Residues 1294 to 1314 (LLLSLFSQTATIDWIFLFCLL) traverse the membrane as a helical segment. The segment covering 1385–1403 (SPDNENRKASQKTSADDPK) has biased composition (basic and acidic residues). The segment at 1385 to 1447 (SPDNENRKAS…SADRAHKSVK (63 aa)) is disordered. Over residues 1411–1424 (SGSSKLNNSFSNPK) the composition is skewed to polar residues. The segment covering 1431–1447 (GRRERSRSADRAHKSVK) has biased composition (basic and acidic residues).

The protein belongs to the RIC1 family. As to quaternary structure, component of a guanine nucleotide exchange factor (GEF) complex.

Its subcellular location is the membrane. Its function is as follows. Probable component of a guanine nucleotide exchange factor (GEF) that may be required for efficient fusion of endosome-derived vesicles with the Golgi. The polypeptide is Guanine nucleotide exchange factor subunit R06F6.8 (Caenorhabditis elegans).